We begin with the raw amino-acid sequence, 96 residues long: MFAPRFVVSMLGALAAFAIATYFLTGSIASTAVQTLLCAVLIQVGYFLAVLFLVWKEARDRRKLSPGQLPADPTNDEKQTGKLSLRRLNRPPHFNS.

The next 2 membrane-spanning stretches (helical) occupy residues 6-26 (FVVSMLGALAAFAIATYFLTG) and 35-55 (TLLCAVLIQVGYFLAVLFLVW). The disordered stretch occupies residues 64-96 (LSPGQLPADPTNDEKQTGKLSLRRLNRPPHFNS).

The protein localises to the cell membrane. Its pathway is glycan metabolism; exopolysaccharide biosynthesis. Inhibition of exopolysaccharide synthesis (EPS) and nodulation ability (NOD). The sequence is that of Exopolysaccharide production repressor protein (exoX) from Sinorhizobium fredii (strain NBRC 101917 / NGR234).